A 115-amino-acid polypeptide reads, in one-letter code: Large ribosomal subunit protein bL20 (115 aa).

The protein belongs to the bacterial ribosomal protein bL20 family.

In terms of biological role, binds directly to 23S ribosomal RNA and is necessary for the in vitro assembly process of the 50S ribosomal subunit. It is not involved in the protein synthesizing functions of that subunit. The sequence is that of Large ribosomal subunit protein bL20 from Chlorobaculum parvum (strain DSM 263 / NCIMB 8327) (Chlorobium vibrioforme subsp. thiosulfatophilum).